The primary structure comprises 167 residues: Ribosome maturation factor RimM (167 aa).

One can recognise a PRC barrel domain in the interval 94 to 166; sequence QNRAWLHELE…YIVVPRFDEF (73 aa).

Belongs to the RimM family. As to quaternary structure, binds ribosomal protein uS19.

Its subcellular location is the cytoplasm. In terms of biological role, an accessory protein needed during the final step in the assembly of 30S ribosomal subunit, possibly for assembly of the head region. Essential for efficient processing of 16S rRNA. May be needed both before and after RbfA during the maturation of 16S rRNA. It has affinity for free ribosomal 30S subunits but not for 70S ribosomes. The polypeptide is Ribosome maturation factor RimM (Chlorobium phaeovibrioides (strain DSM 265 / 1930) (Prosthecochloris vibrioformis (strain DSM 265))).